Here is a 486-residue protein sequence, read N- to C-terminus: Argininosuccinate lyase (486 aa).

Belongs to the lyase 1 family. Argininosuccinate lyase subfamily.

The protein resides in the cytoplasm. It catalyses the reaction 2-(N(omega)-L-arginino)succinate = fumarate + L-arginine. Its pathway is amino-acid biosynthesis; L-arginine biosynthesis; L-arginine from L-ornithine and carbamoyl phosphate: step 3/3. This chain is Argininosuccinate lyase, found in Acidobacterium capsulatum (strain ATCC 51196 / DSM 11244 / BCRC 80197 / JCM 7670 / NBRC 15755 / NCIMB 13165 / 161).